Here is a 275-residue protein sequence, read N- to C-terminus: Rhamnulose-1-phosphate aldolase (275 aa).

The active site involves E117. 3 residues coordinate Zn(2+): H141, H143, and H212.

The protein belongs to the aldolase class II family. RhaD subfamily. In terms of assembly, homotetramer. The cofactor is Zn(2+).

The protein localises to the cytoplasm. It catalyses the reaction L-rhamnulose 1-phosphate = (S)-lactaldehyde + dihydroxyacetone phosphate. The protein operates within carbohydrate degradation; L-rhamnose degradation; glycerone phosphate from L-rhamnose: step 3/3. In terms of biological role, catalyzes the reversible cleavage of L-rhamnulose-1-phosphate to dihydroxyacetone phosphate (DHAP) and L-lactaldehyde. The protein is Rhamnulose-1-phosphate aldolase of Salmonella paratyphi C (strain RKS4594).